Here is a 382-residue protein sequence, read N- to C-terminus: Alanine racemase 1 (382 aa).

The active-site Proton acceptor; specific for D-alanine is the Lys39. At Lys39 the chain carries N6-(pyridoxal phosphate)lysine. Arg138 is a binding site for substrate. Tyr265 functions as the Proton acceptor; specific for L-alanine in the catalytic mechanism. Position 312 (Met312) interacts with substrate.

It belongs to the alanine racemase family. The cofactor is pyridoxal 5'-phosphate.

It catalyses the reaction L-alanine = D-alanine. It functions in the pathway amino-acid biosynthesis; D-alanine biosynthesis; D-alanine from L-alanine: step 1/1. Functionally, catalyzes the interconversion of L-alanine and D-alanine. May also act on other amino acids. This chain is Alanine racemase 1 (alr1), found in Staphylococcus aureus (strain MRSA252).